Reading from the N-terminus, the 255-residue chain is NAD kinase (255 aa).

Asp44 acts as the Proton acceptor in catalysis. NAD(+)-binding positions include 44–45 (DG), His49, 114–115 (NE), Asp144, Ala152, 155–160 (SAYNLS), and Gln216.

It belongs to the NAD kinase family. The cofactor is a divalent metal cation.

It localises to the cytoplasm. The catalysed reaction is NAD(+) + ATP = ADP + NADP(+) + H(+). Its function is as follows. Involved in the regulation of the intracellular balance of NAD and NADP, and is a key enzyme in the biosynthesis of NADP. Catalyzes specifically the phosphorylation on 2'-hydroxyl of the adenosine moiety of NAD to yield NADP. In Rickettsia africae (strain ESF-5), this protein is NAD kinase.